A 274-amino-acid polypeptide reads, in one-letter code: MQVRFHKMHGLGNDFVVIDARATAPVEMTAARARALADRKTGVGCDQLILLEPSAVADARMRIFNADGSEVEACGNATRCVVSLLGGSARIETVAGLLEGRSADGQVSVELGEPRFDWDAIPLAYAMDTRAMPVAWEELEAPMAANVGNPHVVFFVPETDAVALDRLGPRIETDPLFPARINVNVATVDDRANIRLRVWERGVGLTDACGTGACATAVSAIRAGLVDSPVRVTLPGGPLTIDWAPGRPIVMTGPATHVFTAETDLSAFGADSRG.

Asparagine 13, glutamine 47, and asparagine 65 together coordinate substrate. Cysteine 74 acts as the Proton donor in catalysis. Substrate is bound by residues glycine 75–asparagine 76, asparagine 149, asparagine 182, and glutamate 200–arginine 201. Cysteine 209 acts as the Proton acceptor in catalysis. A substrate-binding site is contributed by glycine 210 to threonine 211.

This sequence belongs to the diaminopimelate epimerase family. Homodimer.

It localises to the cytoplasm. The enzyme catalyses (2S,6S)-2,6-diaminopimelate = meso-2,6-diaminopimelate. The protein operates within amino-acid biosynthesis; L-lysine biosynthesis via DAP pathway; DL-2,6-diaminopimelate from LL-2,6-diaminopimelate: step 1/1. Its function is as follows. Catalyzes the stereoinversion of LL-2,6-diaminopimelate (L,L-DAP) to meso-diaminopimelate (meso-DAP), a precursor of L-lysine and an essential component of the bacterial peptidoglycan. In Rhizorhabdus wittichii (strain DSM 6014 / CCUG 31198 / JCM 15750 / NBRC 105917 / EY 4224 / RW1) (Sphingomonas wittichii), this protein is Diaminopimelate epimerase.